The following is a 172-amino-acid chain: Nicotinamide-nucleotide adenylyltransferase (172 aa).

The protein belongs to the archaeal NMN adenylyltransferase family.

Its subcellular location is the cytoplasm. The enzyme catalyses beta-nicotinamide D-ribonucleotide + ATP + H(+) = diphosphate + NAD(+). Its pathway is cofactor biosynthesis; NAD(+) biosynthesis; NAD(+) from nicotinamide D-ribonucleotide: step 1/1. The protein is Nicotinamide-nucleotide adenylyltransferase of Methanococcus vannielii (strain ATCC 35089 / DSM 1224 / JCM 13029 / OCM 148 / SB).